The following is a 326-amino-acid chain: Transcription cofactor vestigial-like protein 3 (326 aa).

The interval 57 to 80 is disordered; it reads VTLPSKQEEEDEEEEEEEKDQPAE. Lys62 participates in a covalent cross-link: Glycyl lysine isopeptide (Lys-Gly) (interchain with G-Cter in SUMO2). A compositionally biased stretch (acidic residues) spans 64-75; that stretch reads EEEDEEEEEEEK. Lys126 is covalently cross-linked (Glycyl lysine isopeptide (Lys-Gly) (interchain with G-Cter in SUMO2)). Disordered regions lie at residues 175–203 and 233–256; these read PPGT…PPAV and HAHM…SALD. The segment covering 233-249 has biased composition (basic residues); that stretch reads HAHMHHRHRHHHHHHHP.

It belongs to the vestigial family. In terms of tissue distribution, enriched in placenta.

It is found in the nucleus. May act as a specific coactivator for the mammalian TEFs. The chain is Transcription cofactor vestigial-like protein 3 (VGLL3) from Homo sapiens (Human).